The primary structure comprises 233 residues: Probable transglycosylase IsaA (233 aa).

The N-terminal stretch at 1–29 (MKKTIMASSLAVALGVTGYAASTGHEAHA) is a signal peptide.

This sequence belongs to the transglycosylase family. IsaA subfamily.

It is found in the secreted. Functionally, is able to cleave peptidoglycan. The polypeptide is Probable transglycosylase IsaA (isaA) (Staphylococcus aureus (strain bovine RF122 / ET3-1)).